The chain runs to 313 residues: DNA-directed RNA polymerase subunit alpha (313 aa).

Residues methionine 1–asparagine 226 are alpha N-terminal domain (alpha-NTD). An alpha C-terminal domain (alpha-CTD) region spans residues lysine 243–glutamate 313.

This sequence belongs to the RNA polymerase alpha chain family. As to quaternary structure, homodimer. The RNAP catalytic core consists of 2 alpha, 1 beta, 1 beta' and 1 omega subunit. When a sigma factor is associated with the core the holoenzyme is formed, which can initiate transcription.

It carries out the reaction RNA(n) + a ribonucleoside 5'-triphosphate = RNA(n+1) + diphosphate. Its function is as follows. DNA-dependent RNA polymerase catalyzes the transcription of DNA into RNA using the four ribonucleoside triphosphates as substrates. This Carboxydothermus hydrogenoformans (strain ATCC BAA-161 / DSM 6008 / Z-2901) protein is DNA-directed RNA polymerase subunit alpha.